A 350-amino-acid polypeptide reads, in one-letter code: Inhibin beta E chain (350 aa).

An N-terminal signal peptide occupies residues 1–19; it reads MRLPDVQLWLVLLWALVRA. A propeptide spanning residues 20–236 is cleaved from the precursor; that stretch reads QGTGSVCPSC…EPGAGRARRR (217 aa). A glycan (N-linked (GlcNAc...) asparagine) is linked at N198. 4 disulfide bridges follow: C240–C248, C247–C315, C276–C347, and C280–C349.

It belongs to the TGF-beta family. In terms of assembly, homodimeric or heterodimeric through association with alpha and beta subunits, linked by one or more disulfide bonds. Inhibins are heterodimers of one alpha and one beta subunit. Activins are homo- or heterodimers of beta subunits only.

It is found in the secreted. Inhibins and activins inhibit and activate, respectively, the secretion of follitropin by the pituitary gland. Inhibins/activins are involved in regulating a number of diverse functions such as hypothalamic and pituitary hormone secretion, gonadal hormone secretion, germ cell development and maturation, erythroid differentiation, insulin secretion, nerve cell survival, embryonic axial development or bone growth, depending on their subunit composition. Inhibins appear to oppose the functions of activins. Functionally, activin E is a homodimer of INHBE secreted by the liver that plays a crucial role in regulating metabolic homeostasis particularly in lipid metabolism and energy homeostasis. Plays a central role in the regulation of adipose tissue lipolysis by preventing the influx of fatty acids from adipose tissue into the liver. Mechanistically, signals via ACVR1C to activate SMAD2/3 signaling, suppressing PPARG target genes in adipose tissue, thereby reducing liver lipid content and improving glycemic control. Induces beige adipocyte formation and thermogenesis in response to cold exposure. This Homo sapiens (Human) protein is Inhibin beta E chain (INHBE).